A 510-amino-acid chain; its full sequence is NAD(P)H-quinone oxidoreductase subunit 2 B, chloroplastic (510 aa).

13 helical membrane-spanning segments follow: residues Leu-26–Leu-46, Ile-57–Phe-77, Ile-99–Ile-119, Met-124–Cys-144, Leu-149–Tyr-169, Tyr-183–Gly-203, Pro-227–Ala-247, Trp-295–Ile-315, Met-323–Gly-342, Tyr-354–Leu-374, Ala-395–Phe-415, Leu-418–Phe-438, and Met-484–Ile-504.

The protein belongs to the complex I subunit 2 family. NDH is composed of at least 16 different subunits, 5 of which are encoded in the nucleus.

It is found in the plastid. The protein resides in the chloroplast thylakoid membrane. The catalysed reaction is a plastoquinone + NADH + (n+1) H(+)(in) = a plastoquinol + NAD(+) + n H(+)(out). The enzyme catalyses a plastoquinone + NADPH + (n+1) H(+)(in) = a plastoquinol + NADP(+) + n H(+)(out). Its function is as follows. NDH shuttles electrons from NAD(P)H:plastoquinone, via FMN and iron-sulfur (Fe-S) centers, to quinones in the photosynthetic chain and possibly in a chloroplast respiratory chain. The immediate electron acceptor for the enzyme in this species is believed to be plastoquinone. Couples the redox reaction to proton translocation, and thus conserves the redox energy in a proton gradient. The polypeptide is NAD(P)H-quinone oxidoreductase subunit 2 B, chloroplastic (Oenothera argillicola (Appalachian evening primrose)).